Reading from the N-terminus, the 473-residue chain is Photosystem II CP43 reaction center protein (473 aa).

Positions 1–14 (MKTLYSLRRFYPVE) are excised as a propeptide. T15 carries the post-translational modification N-acetylthreonine. T15 is modified (phosphothreonine). A run of 5 helical transmembrane segments spans residues 69-93 (LFEV…PHLA), 134-155 (LLGP…KDRN), 178-200 (KALY…RKIT), 255-275 (KPFA…LSYS), and 291-312 (WFNN…ASQA). E367 contacts [CaMn4O5] cluster. The chain crosses the membrane as a helical span at residues 447–471 (RARAAAAGFEKGIDRDFEPVLSMTP).

This sequence belongs to the PsbB/PsbC family. PsbC subfamily. In terms of assembly, PSII is composed of 1 copy each of membrane proteins PsbA, PsbB, PsbC, PsbD, PsbE, PsbF, PsbH, PsbI, PsbJ, PsbK, PsbL, PsbM, PsbT, PsbX, PsbY, PsbZ, Psb30/Ycf12, at least 3 peripheral proteins of the oxygen-evolving complex and a large number of cofactors. It forms dimeric complexes. The cofactor is Binds multiple chlorophylls and provides some of the ligands for the Ca-4Mn-5O cluster of the oxygen-evolving complex. It may also provide a ligand for a Cl- that is required for oxygen evolution. PSII binds additional chlorophylls, carotenoids and specific lipids..

The protein resides in the plastid. It is found in the chloroplast thylakoid membrane. Its function is as follows. One of the components of the core complex of photosystem II (PSII). It binds chlorophyll and helps catalyze the primary light-induced photochemical processes of PSII. PSII is a light-driven water:plastoquinone oxidoreductase, using light energy to abstract electrons from H(2)O, generating O(2) and a proton gradient subsequently used for ATP formation. This is Photosystem II CP43 reaction center protein from Lactuca sativa (Garden lettuce).